The chain runs to 270 residues: uncharacterized protein (270 aa).

Positions 22 to 31 (EAPQRTEASR) are enriched in basic and acidic residues. Residues 22–42 (EAPQRTEASRTHPSPFLALPG) are disordered.

This is an uncharacterized protein from Homo sapiens (Human).